Here is a 219-residue protein sequence, read N- to C-terminus: Large ribosomal subunit protein uL3 (219 aa).

It belongs to the universal ribosomal protein uL3 family. Part of the 50S ribosomal subunit. Forms a cluster with proteins L14 and L19.

One of the primary rRNA binding proteins, it binds directly near the 3'-end of the 23S rRNA, where it nucleates assembly of the 50S subunit. This chain is Large ribosomal subunit protein uL3, found in Corynebacterium kroppenstedtii (strain DSM 44385 / JCM 11950 / CIP 105744 / CCUG 35717).